The chain runs to 656 residues: Pyoverdine export ATP-binding/permease protein PvdT (656 aa).

The ABC transporter domain maps to 6–245 (IDLRAIRKSY…SANPAALQAV (240 aa)). 43–50 (GASGSGKS) serves as a coordination point for ATP. 4 helical membrane passes run 284 to 304 (ALTLLGIVIGVASVVVMLAVG), 538 to 558 (IAAISLLVGGIGVMNIMLMTV), 589 to 609 (LSVVGGLAGVVLALGMGAALL), and 619 to 639 (VPAVAGAFACALVTGVIFGFM).

The protein belongs to the ABC transporter superfamily. Macrolide exporter (TC 3.A.1.122) family. In terms of assembly, part of the tripartite efflux system PvdRT-OpmQ, which is composed of an inner membrane component with both ATPase and permease domains, PvdT, a periplasmic membrane fusion protein, PvdR, and an outer membrane component, OpmQ.

The protein resides in the cell inner membrane. Its function is as follows. Part of the tripartite efflux system PvdRT-OpmQ required for the secretion into the extracellular milieu of the siderophore pyoverdine (PVD), which is involved in iron acquisition. This subunit binds PVD and drives its secretion by hydrolyzing ATP. The system is responsible for export of newly synthesized PVD after the final steps of biosynthesis have taken place in the periplasm. It is also responsible for recycling of PVD after internalization of ferri-PVD into the periplasm by the outer-membrane receptor FpvA and release of iron from PVD, thus making PVD available for new cycles of iron uptake. The chain is Pyoverdine export ATP-binding/permease protein PvdT from Pseudomonas savastanoi pv. phaseolicola (strain 1448A / Race 6) (Pseudomonas syringae pv. phaseolicola (strain 1448A / Race 6)).